The sequence spans 252 residues: Small ribosomal subunit protein uS3 (252 aa).

One can recognise a KH type-2 domain in the interval 38-106 (IRKYIHARLS…EVQINIFEIK (69 aa)). The interval 214–252 (PLAGMDKKQSGTGGGKGGDAPRGKSNFNKGGKPDARKRK) is disordered. Residues 224 to 233 (GTGGGKGGDA) are compositionally biased toward gly residues.

Belongs to the universal ribosomal protein uS3 family. Part of the 30S ribosomal subunit. Forms a tight complex with proteins S10 and S14.

In terms of biological role, binds the lower part of the 30S subunit head. Binds mRNA in the 70S ribosome, positioning it for translation. This is Small ribosomal subunit protein uS3 from Flavobacterium johnsoniae (strain ATCC 17061 / DSM 2064 / JCM 8514 / BCRC 14874 / CCUG 350202 / NBRC 14942 / NCIMB 11054 / UW101) (Cytophaga johnsonae).